The chain runs to 76 residues: Vasotab-TY1 (76 aa).

A signal peptide spans 1 to 21 (MKFTLFSVLVVLLIATFVAAD). Residues 22–76 (DCPRICTADFRPVCGTPSGGRRSANRTFGNQCSLDSHNCLNKGDTYDKLHDGECK) form the Kazal-like domain. Intrachain disulfides connect cysteine 23/cysteine 60, cysteine 27/cysteine 53, and cysteine 35/cysteine 75.

In terms of tissue distribution, expressed by the salivary gland.

It localises to the secreted. Its function is as follows. Vasodilator protein that inhibits vasoconstriction of isolated rat femoral artery induced by phenylephrine. Since platelet aggregation and vasoconstriction are key hemostatic responses, particularly in small wounds, this protein likely participates in the antihemostatic responses during blood feeding. Blocks L-type calcium channels (Cav1/CACNA1) in left ventricular myocytes isolated from rat hearts. This Tabanus yao (Horsefly) protein is Vasotab-TY1.